We begin with the raw amino-acid sequence, 364 residues long: Long-wave-sensitive opsin 1 (364 aa).

Topologically, residues 1-58 (MTQRWGPQRLAGGQPQAGLEESTQASIFTYTNSNATRDPFEGPNYHIAPRWVYHLTSA) are extracellular. An O-linked (GlcNAc) serine glycan is attached at Ser22. A glycan (N-linked (GlcNAc...) asparagine) is linked at Asn34. A helical membrane pass occupies residues 59 to 79 (WMIFVVIASVFTNGLVLVATM). Over 80–90 (RFKKLRHPLNW) the chain is Cytoplasmic. A helical membrane pass occupies residues 91 to 111 (ILVNLAIADLAETIIASTISV). The Extracellular segment spans residues 112 to 126 (VNQIYGYFVLGHPLC). Cys126 and Cys203 are oxidised to a cystine. A helical transmembrane segment spans residues 127 to 147 (VVEGYTVSLCGITGLWSLAII). The Cytoplasmic segment spans residues 148–168 (SWERWLVVCKPFGNVRFDAKL). A helical transmembrane segment spans residues 169–189 (AIAGIAFSWIWAAVWTAPPIF). Topologically, residues 190-219 (GWSRYWPHGLKTSCGPDVFSGSSYPGVQSY) are extracellular. Residues 220 to 240 (MIVLMTTCCIIPLSVIILCYL) traverse the membrane as a helical segment. The Cytoplasmic portion of the chain corresponds to 241–269 (QVWLAIRAVAKQQKESESTQKAEKEVTRM). Residues 270 to 290 (VVVMVLAYCLCWGPYTFFACF) traverse the membrane as a helical segment. At 291 to 301 (AAAHPGYAFHP) the chain is on the extracellular side. Residues 302-324 (LVAALPAYFAKSATIYNPIIYVF) form a helical membrane-spanning segment. Lys312 carries the N6-(retinylidene)lysine modification. The Cytoplasmic segment spans residues 325–364 (MNRQFRNCILQLFGKKVDDSSELSSASRTEASSVSSVSPA).

It belongs to the G-protein coupled receptor 1 family. Opsin subfamily. In terms of processing, phosphorylated on some or all of the serine and threonine residues present in the C-terminal region. In terms of tissue distribution, the three color pigments are found in the cone photoreceptor cells.

It localises to the membrane. In terms of biological role, visual pigments are the light-absorbing molecules that mediate vision. They consist of an apoprotein, opsin, covalently linked to cis-retinal. This chain is Long-wave-sensitive opsin 1 (OPN1LW), found in Canis lupus familiaris (Dog).